Here is a 598-residue protein sequence, read N- to C-terminus: uncharacterized protein (598 aa).

Residues 1–23 (MSHEGSRQARDRGVTRSKAEKAR) show a composition bias toward basic and acidic residues. Disordered regions lie at residues 1–32 (MSHEGSRQARDRGVTRSKAEKARPPTQPVPQV), 151–190 (FHNEEPGNPDQFLLGSSWDKESQKPTQPSEPSAEPKVTPR), and 222–241 (PSKESLRSTAEGERVYSPQS). Basic and acidic residues predominate over residues 225–235 (ESLRSTAEGER). Phosphoserine occurs at positions 238 and 242. 2 disordered regions span residues 366-396 (RRSQAGTATSACESQALSSRAPSKPHVSSPR) and 551-571 (AEEGTPQAPEQQPIQTGVSKP). 2 stretches are compositionally biased toward polar residues: residues 369 to 386 (QAGTATSACESQALSSRA) and 558 to 569 (APEQQPIQTGVS).

This is an uncharacterized protein from Mus musculus (Mouse).